The chain runs to 343 residues: Methylthioribose-1-phosphate isomerase (343 aa).

Residues 48–50, Arg88, and Gln193 each bind substrate; that span reads RGA. Catalysis depends on Asp234, which acts as the Proton donor. 244 to 245 contacts substrate; sequence NK.

Belongs to the eIF-2B alpha/beta/delta subunits family. MtnA subfamily.

It carries out the reaction 5-(methylsulfanyl)-alpha-D-ribose 1-phosphate = 5-(methylsulfanyl)-D-ribulose 1-phosphate. The protein operates within amino-acid biosynthesis; L-methionine biosynthesis via salvage pathway; L-methionine from S-methyl-5-thio-alpha-D-ribose 1-phosphate: step 1/6. Its function is as follows. Catalyzes the interconversion of methylthioribose-1-phosphate (MTR-1-P) into methylthioribulose-1-phosphate (MTRu-1-P). The polypeptide is Methylthioribose-1-phosphate isomerase (Thermotoga neapolitana (strain ATCC 49049 / DSM 4359 / NBRC 107923 / NS-E)).